We begin with the raw amino-acid sequence, 801 residues long: Protein ACCUMULATION AND REPLICATION OF CHLOROPLASTS 6, chloroplastic (801 aa).

The transit peptide at 1 to 67 directs the protein to the chloroplast; it reads MEALSHVGIG…SSSFATATTT (67 aa). Residues 68–618 lie on the Stromal side of the membrane; sequence ATLVSPPPSI…ADMLKEASVK (551 aa). In terms of domain architecture, J spans 89-153; that stretch reads DFYQVLGAQT…RSRREYNEGL (65 aa). The helical transmembrane segment at 619–638 threads the bilayer; it reads ILAAGVAIGLISLFSQKYFL. At 639 to 801 the chain is on the chloroplast intermembrane side; it reads KSSSSFQRKD…KITEGSVLAS (163 aa). Residues 639–801 form an interaction with PDV2 region; that stretch reads KSSSSFQRKD…KITEGSVLAS (163 aa).

In terms of assembly, self-interacts. Part of a complex made of ARC3, ARC6, FTSZ1 and FTSZ2. Interacts with FTSZ2-1 and FTSZ2-2 (via C-terminus), but not with FTSZ1; this interaction enables ARC3 binding to FTSZ2. Binds to CDT1A. Interacts (via C-terminus) with PDV2 (via C-terminus) in the chloroplast intermembrane space; this interaction induces homodimerization and leads to the formation of a heterotetramer containing two ARC6 and two PDV2 subunits. Interacts with MCD1 in the chloroplast stroma and facilitates its subsequent binding to FtsZ2-1. Interacts (via J domain) with CJD1 (via J-like domain). Mostly expressed in young leaves.

The protein resides in the plastid. It is found in the chloroplast inner membrane. Its function is as follows. Component of the plastid division machinery consisting in a binary fission accomplished by the simultaneous constriction of the FtsZ ring on the stromal side of the inner envelope membrane, and the ARC5 ring on the cytosolic side of the outer envelope membrane. Involved in the initiation of proplastid and plastid division (including chloroplasts, statoliths and leukoplasts). Promotes the assembly and/or stabilization of the plastid-dividing FtsZ ring, functioning as an antagonistic regulator of FtsZ dynamics against CDP1 and facilitating MCD1 positioning to membrane tethered FtsZ filaments to form the chloroplast Z-Ring; inhibits GDP-induced disassembly of FTSZ2 but enables ARC3 binding to FTSZ2-1. Relays plastid division site position between stroma and outer surface via interactions with the stromal FtsZ ring and the outer membrane PDV2 that recruits cytoplasmic ARC5 ring. Required for plastid equatorial positioning of PDV2 and ARC5. May contribute to gravitropism in stems and hypocotyls. Seems to influence stromule (stroma-filled tubular extensions of the plastid envelope membrane) length and frequency. In Arabidopsis thaliana (Mouse-ear cress), this protein is Protein ACCUMULATION AND REPLICATION OF CHLOROPLASTS 6, chloroplastic.